We begin with the raw amino-acid sequence, 160 residues long: Endoribonuclease YbeY (160 aa).

Zn(2+) contacts are provided by His121, His125, and His131.

This sequence belongs to the endoribonuclease YbeY family. It depends on Zn(2+) as a cofactor.

It is found in the cytoplasm. Its function is as follows. Single strand-specific metallo-endoribonuclease involved in late-stage 70S ribosome quality control and in maturation of the 3' terminus of the 16S rRNA. This is Endoribonuclease YbeY from Hydrogenovibrio crunogenus (strain DSM 25203 / XCL-2) (Thiomicrospira crunogena).